The chain runs to 824 residues: MSISSLFGGRYDNKFLLNMSSAPKIELIVDKVASLSERRLEGRLPEDWFRHIMDPETEFNGEFADALCIGIDEFAQPLPFLPFKALLVTGTAGAGKTNSIQTLAANLDCIVTATTSIAAQNLSVVLNRSKSAQVKTIFKTFGFNSSHVSMSERQSYIANDERSIQIQQKQDLSIYWNVISDIAERALGAVACKTKELPDLCESSVIVIDEAGVILRHILHTVVFFYWFYNALYKTPLYENGIVPCIVCVGSPTQSNALVTSFNPLTQNKDVKRGIDVLSALICDDVLSKYCEVDNNWIIFVNNKRCADHAFGDFLKHIEFGLPLKPELIEYVDQFVKPASYIRNPMNEIETTRLFLSHNEVKNYFRSLHEQVEVTNRNNLFVFPVYFLIKNKTFEDYKSEIGNFSLEIEPWFKSNIHRLNTYSQFADQDLSKTVQLEEIVLEDGSVEETLITCHLKHIRNSSIGVTSKIKASTVGFSGTYEKFVELLQSDLFIEKTSCEQTIHAYSFLSGLMFGGMYSFCCSEFTTPEVLMEIKNIKMPSIEFLESEMSRMSRDVQTVETDERYDFGLVDDGLSDMDLLEIDPCGDPFFTRYSKLPLTNSLSFEEISLLYTTFKDIFISRFAILQKHTKGKFGKTLLVTYNRNNVSRKQCGEIYSHLKSFYGMLTYAIPANNYTLEGYTNDNVVHLGTDKQLPQILYKKGLPRLVIKDEMGFISVLDNNVSKFVDVVNGQSFHLCTTVDYATVSKVSMTITKSQGLSIQKVAIDFGSDPKNLKLSSIYVGMSRVTDPNNLIMNVNPLRLNYENDNFIAPHIVKALKNENTMLIF.

90-97 (GTAGAGKT) serves as a coordination point for ATP.

Belongs to the herpesviridae helicase family. In terms of assembly, associates with the primase and the primase-associated factor to form the helicase-primase complex.

The protein resides in the host nucleus. Component of the helicase/primase complex. Unwinds the DNA at the replication forks and generates single-stranded DNA for both leading and lagging strand synthesis. The primase synthesizes short RNA primers on the lagging strand that the polymerase elongates using dNTPs. Possesses helicase-like motifs and therefore may act as the helicase subunit of the complex. The protein is DNA replication helicase of Human herpesvirus 6B (strain Z29) (HHV-6 variant B).